Here is a 158-residue protein sequence, read N- to C-terminus: Lipoprotein signal peptidase (158 aa).

3 consecutive transmembrane segments (helical) span residues 4–24 (KYYITISLIVAIAILIIDQVT), 63–83 (KMGFFYIITIVILIVLVLFYI), and 88–108 (YNLFMQVAISLLFAGALGNFI). Residues Asp118 and Asp136 contribute to the active site. Residues 131-151 (IFNVADSSLTIGVLFIIIALL) traverse the membrane as a helical segment.

The protein belongs to the peptidase A8 family.

It is found in the cell membrane. It carries out the reaction Release of signal peptides from bacterial membrane prolipoproteins. Hydrolyzes -Xaa-Yaa-Zaa-|-(S,diacylglyceryl)Cys-, in which Xaa is hydrophobic (preferably Leu), and Yaa (Ala or Ser) and Zaa (Gly or Ala) have small, neutral side chains.. Its pathway is protein modification; lipoprotein biosynthesis (signal peptide cleavage). Its function is as follows. This protein specifically catalyzes the removal of signal peptides from prolipoproteins. The protein is Lipoprotein signal peptidase of Staphylococcus haemolyticus (strain JCSC1435).